The sequence spans 585 residues: MEVEEEVSRWEGYADWRNRAAVKGRHGGMLAASFVLVVEILENLAYLANASNLVLYLREYMHMSPSKSANDVTNFMGTAFLLALLGGFLSDAFFSTFQIFLISASIEFLGLIILTIQARTPSLMPPSCDSPTCEEVSGSKAAMLFVGLYLVALGVGGIKGSLASHGAEQFDESTPKGRKQRSTFFNYFVFCLACGALVAVTFVVWLEDNKGWEWGFGVSTIAIFVSILIFLSGSRFYRNKIPCGSPLTTILKVLLAASVKCCSSGSSSNAVASMSVSPSNHCVSKGKKEVESQGELEKPRQEEALPPRAQLTNSLKVLNGAADEKPVHRLLECTVQQVEDVKIVLKMLPIFACTIMLNCCLAQLSTFSVQQAASMNTKIGSLKIPPASLPIFPVVFIMILAPIYDHLIIPFARKATKTETGVTHLQRIGVGLVLSILAMAVAALVEIKRKGVAKDSGLLDSKETLPVTFLWIALQYLFLGSADLFTLAGLLEYFFTEAPSSMRSLATSLSWASLAMGYYLSSVIVSIVNSITGSSGNTPWLRGKSINRYKLDYFYWLMCVLSAANFLHYLFWAMRYKYRSTGSRS.

Transmembrane regions (helical) follow at residues 28-48 (GMLAASFVLVVEILENLAYLA), 75-95 (FMGTAFLLALLGGFLSDAFFS), 96-116 (TFQIFLISASIEFLGLIILTI), 142-162 (AMLFVGLYLVALGVGGIKGSL), 184-204 (FFNYFVFCLACGALVAVTFVV), 211-231 (GWEWGFGVSTIAIFVSILIFL), 343-363 (IVLKMLPIFACTIMLNCCLAQ), 391-411 (IFPVVFIMILAPIYDHLIIPF), 428-448 (IGVGLVLSILAMAVAALVEIK), 465-485 (LPVTFLWIALQYLFLGSADLF), 508-528 (SLSWASLAMGYYLSSVIVSIV), and 554-574 (FYWLMCVLSAANFLHYLFWAM).

This sequence belongs to the major facilitator superfamily. Proton-dependent oligopeptide transporter (POT/PTR) (TC 2.A.17) family. Expressed in root hairs and in epidermis of both root tips and mature regions of roots. Detected in shoots, stems, flowers, siliques and imbibed seeds. Expressed in vascular tissues in cotyledons, trus leaves, hypocotyls, roots and inflorescence stems.

The protein localises to the cell membrane. In terms of biological role, low-affinity proton-dependent nitrate transporter. Involved in constitutive nitrate uptake. Not involved in histidine or dipeptides transport. Involved in (+)-abscisic acid (ABA) transport, but not in gibberellin, indole-3-acetic acid or jasmonic acid import. Mediates cellular ABA uptake. Nitrate does not compete with abscisic acid as a substrate of NPF4.6. The polypeptide is Protein NRT1/ PTR FAMILY 4.6 (NPF4.6) (Arabidopsis thaliana (Mouse-ear cress)).